A 434-amino-acid polypeptide reads, in one-letter code: Glutamyl-tRNA reductase (434 aa).

Substrate contacts are provided by residues 52–55 (TCNR), Ser-115, 120–122 (ETQ), and Gln-126. Cys-53 functions as the Nucleophile in the catalytic mechanism. Position 195 to 200 (195 to 200 (GAGEMI)) interacts with NADP(+).

The protein belongs to the glutamyl-tRNA reductase family. In terms of assembly, homodimer.

The catalysed reaction is (S)-4-amino-5-oxopentanoate + tRNA(Glu) + NADP(+) = L-glutamyl-tRNA(Glu) + NADPH + H(+). The protein operates within porphyrin-containing compound metabolism; protoporphyrin-IX biosynthesis; 5-aminolevulinate from L-glutamyl-tRNA(Glu): step 1/2. Functionally, catalyzes the NADPH-dependent reduction of glutamyl-tRNA(Glu) to glutamate 1-semialdehyde (GSA). This Cupriavidus pinatubonensis (strain JMP 134 / LMG 1197) (Cupriavidus necator (strain JMP 134)) protein is Glutamyl-tRNA reductase.